The following is a 363-amino-acid chain: Translocating chain-associated membrane protein 1-like 1 (363 aa).

Residues 1 to 29 (MGLRKKNARNPPVLSHEFMVQNHADMVSC) lie on the Cytoplasmic side of the membrane. The chain crosses the membrane as a helical span at residues 30–50 (VGMFFVLGLMFEGTSEMSIAF). The Lumenal segment spans residues 51–80 (LTLQHGVVVPAEGLPSGSRTLYHYGVKDLA). Residues 81–101 (TVFFYMLVAIIIHATIQEYVL) form a helical membrane-spanning segment. The Cytoplasmic portion of the chain corresponds to 102–120 (DKLSRRLQLTKGKQNKLNE). The 209-residue stretch at 116–324 (NKLNEAGQLS…TVWLQRWLED (209 aa)) folds into the TLC domain. The helical transmembrane segment at 121 to 141 (AGQLSVFYIVSGIWGMIILAS) threads the bilayer. Over 142 to 159 (ENCLSDPTLLWKSQPHNM) the chain is Lumenal. Residues 160–179 (MTFQMKFFYISQLAYWFHSF) traverse the membrane as a helical segment. The Cytoplasmic portion of the chain corresponds to 180-191 (PELYFQKVRKQD). Residues 192 to 214 (IPGQLIYIGLHLFHIGGAYLLYL) form a helical membrane-spanning segment. The Lumenal segment spans residues 215-218 (NHLG). The chain crosses the membrane as a helical span at residues 219–241 (LLLLMLHYAVELLSSVCSLLYFG). At 242-250 (DERYQKGLS) the chain is on the cytoplasmic side. Residues 251–271 (LWPIVFISGRLVTLIVSVVTV) form a helical membrane-spanning segment. Over 272–295 (GLHLAGTNRNGNALSGNVNVLAAK) the chain is Lumenal. A helical membrane pass occupies residues 296-316 (IAVLSSSCSIQVYITWTLTTV). The Cytoplasmic portion of the chain corresponds to 317-363 (WLQRWLEDANLHVCGRKRRSRARKGTENGVENPNRIDSPPKKKEKAP). The tract at residues 338–363 (ARKGTENGVENPNRIDSPPKKKEKAP) is disordered. The span at 354 to 363 (SPPKKKEKAP) shows a compositional bias: basic and acidic residues.

Belongs to the TRAM family.

Its subcellular location is the endoplasmic reticulum membrane. In terms of biological role, stimulatory or required for the translocation of secretory proteins across the ER membrane. The protein is Translocating chain-associated membrane protein 1-like 1 (Tram1l1) of Mus musculus (Mouse).